Here is a 290-residue protein sequence, read N- to C-terminus: Nucleoid occlusion protein (290 aa).

The segment at residues 153 to 172 (EALAQRLGKGQSTIANKLRL) is a DNA-binding region (H-T-H motif).

The protein belongs to the ParB family.

It is found in the cytoplasm. The protein resides in the nucleoid. Functionally, effects nucleoid occlusion by binding relatively nonspecifically to DNA and preventing the assembly of the division machinery in the vicinity of the nucleoid, especially under conditions that disturb the cell cycle. It helps to coordinate cell division and chromosome segregation by preventing the formation of the Z ring through the nucleoid, which would cause chromosome breakage. The chain is Nucleoid occlusion protein from Bacillus anthracis (strain A0248).